Here is a 320-residue protein sequence, read N- to C-terminus: Stress-involved WYL domain-containing regulator (320 aa).

The HTH deoR-type domain maps to 7–65 (TTGRVVQLLGLLQSRRVWTGEELAERLGVTGRSVRRDIERLRELGYPVHASKGQGGGYQ). Residues 24–43 (WTGEELAERLGVTGRSVRRD) constitute a DNA-binding region (H-T-H motif). Residues 139–218 (DTAVAPDVLM…SDVRATGTTF (80 aa)) enclose the WYL domain. The WCX domain stretch occupies residues 245–320 (VRYFAPEKVV…MADRLRRAVR (76 aa)).

In terms of assembly, homodimer.

Functionally, transcriptional activator. Acts as a transcriptional activator of the MSMEG_1357-56 operon upon genotoxic stress. Controls adjacent genes that belong to the DinB/YfiT-like putative metalloenzymes superfamily by upregulating their expression in response to various genotoxic stress conditions, including exposure to H(2)O(2) or the natural antibiotic zeocin, as well as mitomycin C (MMC), diamide and UVC radiation. Upon genotoxic stress, upregulates two genes encoding proteins of the DinB/YfiT-like putative metalloenzymes superfamily, MSMEG_1357 and MSMEG_1356. Binds different forms of single-stranded DNA (ssDNA) with high affinity, primarily through its characteristic WYL domain. Binds nucleic acids with single-stranded regions, such as polyT 20mer ssDNA, 5' tailed, 3' tailed and fork DNA, but not ssRNA. This chain is Stress-involved WYL domain-containing regulator, found in Mycolicibacterium smegmatis (strain ATCC 700084 / mc(2)155) (Mycobacterium smegmatis).